The chain runs to 126 residues: Small ribosomal subunit protein uS13 (126 aa).

The interval 96 to 126 (LPVRGQQTKTNARTRKGRRKGTVANKKKVSK) is disordered. Positions 107–126 (ARTRKGRRKGTVANKKKVSK) are enriched in basic residues.

Belongs to the universal ribosomal protein uS13 family. In terms of assembly, part of the 30S ribosomal subunit. Forms a loose heterodimer with protein S19. Forms two bridges to the 50S subunit in the 70S ribosome.

Functionally, located at the top of the head of the 30S subunit, it contacts several helices of the 16S rRNA. In the 70S ribosome it contacts the 23S rRNA (bridge B1a) and protein L5 of the 50S subunit (bridge B1b), connecting the 2 subunits; these bridges are implicated in subunit movement. Contacts the tRNAs in the A and P-sites. The polypeptide is Small ribosomal subunit protein uS13 (Hydrogenobaculum sp. (strain Y04AAS1)).